Reading from the N-terminus, the 790-residue chain is Lon protease 2 (790 aa).

Positions 18–210 (LRILPLRNMV…HVTFYMTRQL (193 aa)) constitute a Lon N-terminal domain. Residue 362-369 (GPPGVGKT) coordinates ATP. The Lon proteolytic domain maps to 598 to 779 (SWGCGIATGL…SDVLQLALLP (182 aa)). Active-site residues include serine 685 and lysine 728.

This sequence belongs to the peptidase S16 family. In terms of assembly, homohexamer. Organized in a ring with a central cavity.

It is found in the cytoplasm. It catalyses the reaction Hydrolysis of proteins in presence of ATP.. Its function is as follows. ATP-dependent serine protease that mediates the selective degradation of mutant and abnormal proteins as well as certain short-lived regulatory proteins. Required for cellular homeostasis and for survival from DNA damage and developmental changes induced by stress. Degrades polypeptides processively to yield small peptide fragments that are 5 to 10 amino acids long. Binds to DNA in a double-stranded, site-specific manner. The sequence is that of Lon protease 2 from Syntrophobacter fumaroxidans (strain DSM 10017 / MPOB).